The chain runs to 280 residues: Pantothenate synthetase (280 aa).

ATP is bound at residue 31–38 (MGNLHVGH). Catalysis depends on His38, which acts as the Proton donor. (R)-pantoate is bound at residue Gln62. Residue Gln62 participates in beta-alanine binding. Position 150-153 (150-153 (GKKD)) interacts with ATP. Gln156 contacts (R)-pantoate. Residues Val179 and 187–190 (MSSR) each bind ATP.

The protein belongs to the pantothenate synthetase family. Homodimer.

Its subcellular location is the cytoplasm. The enzyme catalyses (R)-pantoate + beta-alanine + ATP = (R)-pantothenate + AMP + diphosphate + H(+). It participates in cofactor biosynthesis; (R)-pantothenate biosynthesis; (R)-pantothenate from (R)-pantoate and beta-alanine: step 1/1. Its function is as follows. Catalyzes the condensation of pantoate with beta-alanine in an ATP-dependent reaction via a pantoyl-adenylate intermediate. This is Pantothenate synthetase from Xanthomonas oryzae pv. oryzae (strain KACC10331 / KXO85).